The primary structure comprises 331 residues: UDP-galactose/UDP-glucose transporter 3 (331 aa).

Transmembrane regions (helical) follow at residues 11-31 (VLLL…QGIL), 49-69 (HLAF…YIMI), 80-100 (APWW…AMGI), 112-132 (VLAK…VYGI), 135-155 (TLPE…FALL), 170-190 (APLG…TNAT), 206-226 (IMLG…FGLP), and 245-265 (WDIL…FLTI). A Di-lysine motif motif is present at residues 327–331 (KKKKA).

It belongs to the nucleotide-sugar transporter family. UDP-galactose:UMP antiporter (TC 2.A.7.11) subfamily. In terms of tissue distribution, mostly expressed in flowers, and, to a lower extent, in roots, stems and leaves.

It is found in the endoplasmic reticulum membrane. The protein localises to the golgi apparatus membrane. In terms of biological role, essential sugar transporter required for the transport of UDP-glucose from the cytoplasm into the Golgi and the endoplasmic reticulum. Essential for pollen development and involved in embryo sac progress. This is UDP-galactose/UDP-glucose transporter 3 from Arabidopsis thaliana (Mouse-ear cress).